We begin with the raw amino-acid sequence, 98 residues long: NADH-ubiquinone oxidoreductase chain 4L (98 aa).

3 helical membrane-spanning segments follow: residues 1–21 (MTLI…GLLM), 29–49 (ALLC…LTIL), and 61–81 (IILL…LVMV).

Belongs to the complex I subunit 4L family. In terms of assembly, core subunit of respiratory chain NADH dehydrogenase (Complex I) which is composed of 45 different subunits.

The protein resides in the mitochondrion inner membrane. The catalysed reaction is a ubiquinone + NADH + 5 H(+)(in) = a ubiquinol + NAD(+) + 4 H(+)(out). Core subunit of the mitochondrial membrane respiratory chain NADH dehydrogenase (Complex I) which catalyzes electron transfer from NADH through the respiratory chain, using ubiquinone as an electron acceptor. Part of the enzyme membrane arm which is embedded in the lipid bilayer and involved in proton translocation. The protein is NADH-ubiquinone oxidoreductase chain 4L (MT-ND4L) of Balaenoptera physalus (Fin whale).